Consider the following 219-residue polypeptide: Chalcone--flavanone isomerase (219 aa).

Substrate contacts are provided by threonine 50, asparagine 115, and serine 188.

It belongs to the chalcone isomerase family.

It catalyses the reaction a chalcone = a flavanone.. The protein operates within secondary metabolite biosynthesis; flavonoid biosynthesis. In terms of biological role, catalyzes the intramolecular cyclization of bicyclic chalcones into tricyclic (S)-flavanones. Responsible for the isomerization of 4,2',4',6'-tetrahydroxychalcone (also termed chalcone) into naringenin. This Clitoria ternatea (Butterfly pea) protein is Chalcone--flavanone isomerase (CHI).